The following is a 256-amino-acid chain: uncharacterized protein (256 aa).

Positions 1-24 (MIKRVNKLVLGISLLFLVISIAAG) are cleaved as a signal peptide. Residue Cys25 is the site of N-palmitoyl cysteine attachment. The S-diacylglycerol cysteine moiety is linked to residue Cys25.

It belongs to the staphylococcal tandem lipoprotein family.

Its subcellular location is the cell membrane. This is an uncharacterized protein from Staphylococcus aureus.